A 350-amino-acid polypeptide reads, in one-letter code: UDP-3-O-acylglucosamine N-acyltransferase (350 aa).

The active-site Proton acceptor is the His-244.

This sequence belongs to the transferase hexapeptide repeat family. LpxD subfamily. In terms of assembly, homotrimer.

It catalyses the reaction a UDP-3-O-[(3R)-3-hydroxyacyl]-alpha-D-glucosamine + a (3R)-hydroxyacyl-[ACP] = a UDP-2-N,3-O-bis[(3R)-3-hydroxyacyl]-alpha-D-glucosamine + holo-[ACP] + H(+). Its pathway is bacterial outer membrane biogenesis; LPS lipid A biosynthesis. Catalyzes the N-acylation of UDP-3-O-acylglucosamine using 3-hydroxyacyl-ACP as the acyl donor. Is involved in the biosynthesis of lipid A, a phosphorylated glycolipid that anchors the lipopolysaccharide to the outer membrane of the cell. This Janthinobacterium sp. (strain Marseille) (Minibacterium massiliensis) protein is UDP-3-O-acylglucosamine N-acyltransferase.